The following is an 876-amino-acid chain: Extended synaptotagmin-2-B (876 aa).

Residues 1–21 (MASESGAEKGPPTTPAENGQP) form a disordered region. Residues 1-35 (MASESGAEKGPPTTPAENGQPGVPIAAAVAADEQG) are Cytoplasmic-facing. Residues 36–56 (MISVDIAGLFYQFSKTFILIF) traverse the membrane as a helical segment. Residues 57–59 (PVY) are Lumenal-facing. A helical transmembrane segment spans residues 60 to 80 (VLGYFGLSFSWLLIALVLLLW). Residues 81 to 876 (WRRNKGNKNS…EDGTRAAASS (796 aa)) are Cytoplasmic-facing. The 180-residue stretch at 123 to 302 (DIERAEWLNK…LPNRITVPLV (180 aa)) folds into the SMP-LTD domain. C2 domains lie at 301–421 (LVSD…DEWF) and 446–592 (NLDQ…HLNN). Ca(2+) contacts are provided by lysine 332, aspartate 333, aspartate 345, aspartate 392, glutamate 393, aspartate 394, aspartate 396, aspartate 398, and aspartate 399. The interval 614–714 (VRSPDEQHTS…KEPTPSIASD (101 aa)) is disordered. Positions 636-656 (PPTPQMPAPSPAVAHKPPPTP) are enriched in pro residues. Low complexity predominate over residues 686–698 (SSSSLSGSSFTYS). Residues 741–863 (PLGQIQLTIR…DAAKGWTQWF (123 aa)) form the C2 3 domain. Positions 788-795 (KRRSGRRK) are required for phosphatidylinositol 4,5-bisphosphate-dependent location at the cell membrane.

It belongs to the extended synaptotagmin family. Interacts with fgfr1 that has been activated by fgf1 binding. Interacts (via C2 domains) with the AP-2 complex (via an alpha subunit). Identified in a complex with the AP-2 complex and fgfr1.

It is found in the cell membrane. It localises to the endoplasmic reticulum membrane. Functionally, tethers the endoplasmic reticulum to the cell membrane and promotes the formation of appositions between the endoplasmic reticulum and the cell membrane. Binds glycerophospholipids in a barrel-like domain and may play a role in cellular lipid transport. Plays a role in the rapid internalization of fgfr1 that has been activated by fgf1 binding; this occurs most likely via the AP-2 complex. Required for normal fgf signaling and the activation of downstream signaling cascades via its role in the internalization of activated fgfr1. Required for normal embryonic development via its role in fgf signaling and the downstream regulation of t/xBRA expression. The protein is Extended synaptotagmin-2-B (esyt2-b) of Xenopus laevis (African clawed frog).